Consider the following 382-residue polypeptide: Protein RecA (382 aa).

79–86 (GPESSGKT) contacts ATP.

The protein belongs to the RecA family.

The protein resides in the cytoplasm. Its function is as follows. Can catalyze the hydrolysis of ATP in the presence of single-stranded DNA, the ATP-dependent uptake of single-stranded DNA by duplex DNA, and the ATP-dependent hybridization of homologous single-stranded DNAs. It interacts with LexA causing its activation and leading to its autocatalytic cleavage. In Streptococcus sanguinis (strain SK36), this protein is Protein RecA.